The sequence spans 3011 residues: Genome polyprotein (3011 aa).

S2 carries the N-acetylserine; by host modification. The interaction with STAT1 stretch occupies residues 2 to 23; that stretch reads STNPKPQRKTKRNTNRRPQNVK. The interaction with EIF2AK2/PKR stretch occupies residues 2–58; sequence STNPKPQRKTKRNTNRRPQNVKFPGGGQIVGGVCLLPRRGPRVGVRATRKTSERSQP. An interaction with DDX3X region spans residues 2 to 59; sequence STNPKPQRKTKRNTNRRPQNVKFPGGGQIVGGVCLLPRRGPRVGVRATRKTSERSQPR. Positions 2 to 75 are disordered; it reads STNPKPQRKT…PKARRPEGRS (74 aa). Residues 2-168 lie on the Cytoplasmic side of the membrane; that stretch reads STNPKPQRKT…EDGVNYATGN (167 aa). 2 consecutive short sequence motifs (nuclear localization signal) follow at residues 5-13 and 38-43; these read PKPQRKTKR and PRRGPR. Over residues 7–16 the composition is skewed to basic residues; that stretch reads PQRKTKRNTN. A Phosphoserine; by host modification is found at S53. Short sequence motifs (nuclear localization signal) lie at residues 58–64 and 66–71; these read PRGRRQP and PKARRP. Positions 58–68 are enriched in basic residues; it reads PRGRRQPIPKA. Position 99 is a phosphoserine; by host (S99). Positions 112–152 are important for endoplasmic reticulum and mitochondrial localization; the sequence is PRRRSRNLGKVIDTLTCGFADLMGYIPLVGAPLGGAARALA. The residue at position 116 (S116) is a Phosphoserine; by host PKA. An interaction with APOA2 region spans residues 122-173; sequence VIDTLTCGFADLMGYIPLVGAPLGGAARALAHGVRVLEDGVNYATGNLPGCS. The segment at 164–167 is important for lipid droplets localization; the sequence is YATG. The helical transmembrane segment at 169-189 threads the bilayer; sequence LPGCSFSIFLLALLSCLTVPA. A propeptide spans 178–191 (ER anchor for the core protein, removed in mature form by host signal peptidase); sequence LLALLSCLTVPASA. The Lumenal segment spans residues 190-358; that stretch reads SAVEVRNSSG…AGAHWGVLAG (169 aa). N-linked (GlcNAc...) asparagine; by host glycans are attached at residues N196, N209, and N234. An important for fusion region spans residues 265–296; sequence IVGAAAFCSAMYVGDLCGSIFLVGQLFTLSPR. Residue N305 is glycosylated (N-linked (GlcNAc...) asparagine; by host). The chain crosses the membrane as a helical span at residues 359-379; sequence PAYYSMVGNWAKVLVVLLLFA. Residues 380–725 lie on the Lumenal side of the membrane; it reads GVDATTQVTG…WEYVVLLFLL (346 aa). The segment at 385–411 is HVR1; it reads TQVTGGTAGRNAYRLASLFSTGPSQNI. N417, N423, N430, and N448 each carry an N-linked (GlcNAc...) (high mannose) asparagine; by host glycan. 3 cysteine pairs are disulfide-bonded: C429–C552, C486–C494, and C503–C508. Residues 474 to 479 are HVR2; sequence YGGKAS. The segment at 480 to 493 is CD81-binding 1; the sequence is NDQRPYCWHYAPRP. Residue N532 is glycosylated (N-linked (GlcNAc...) (high mannose) asparagine; by host). N540 is a glycosylation site (N-linked (GlcNAc...) asparagine; by host). A CD81-binding 2 region spans residues 544–551; sequence PPIGNWFG. N556 carries an N-linked (GlcNAc...) (high mannose) asparagine; by host glycan. Cystine bridges form between C564–C569, C581–C585, C597–C620, and C607–C644. 2 N-linked (GlcNAc...) (high mannose) asparagine; by host glycosylation sites follow: N623 and N645. Cysteines 652 and 677 form a disulfide. Positions 660–671 are PKR/eIF2-alpha phosphorylation homology domain (PePHD); sequence AELSPLLLSTTQ. The chain crosses the membrane as a helical span at residues 726–746; the sequence is LADARICACLWMMLLISQVEA. Over 747–757 the chain is Lumenal; it reads ALENLIVLNAA. Residues 758-778 form a helical membrane-spanning segment; sequence SLAGTHGIVPFFIFFCAAWYL. Topologically, residues 779–781 are cytoplasmic; that stretch reads KGK. Residues 782–803 traverse the membrane as a helical segment; it reads WAPGLVYSVYGMWPLLLLLLAL. The Lumenal portion of the chain corresponds to 804–813; the sequence is PQRAYALDQE. Residues 814-834 traverse the membrane as a helical segment; sequence LAASCGAVVFISLAVLTLSPY. Topologically, residues 835–838 are cytoplasmic; the sequence is YKQY. The chain crosses the membrane as a helical span at residues 839 to 859; sequence MARGIWWLQYMLTRAEALLHV. Residues 860 to 881 lie on the Lumenal side of the membrane; it reads WVPSLNARGGRDGAILLMCVLH. A helical membrane pass occupies residues 882-902; sequence PHLLFDITKIMLAILGPLWIL. Positions 903–1026 constitute a Peptidase C18 domain; that stretch reads QASLLRVPYF…ALTDKGWRLL (124 aa). Residues 903–1657 lie on the Cytoplasmic side of the membrane; the sequence is QASLLRVPYF…CMSADLEVVT (755 aa). The interval 904-1206 is protease NS2-3; it reads ASLLRVPYFV…PVESLETTMR (303 aa). Residue C922 is the site of S-palmitoyl cysteine; by host attachment. An interaction with host SCPS1 region spans residues 929–949; it reads AGGHYVQMALLKLGALTGTYI. Catalysis depends on for protease NS2 activity; shared with dimeric partner residues H952, E972, and C993. Residues 1027 to 1208 enclose the Peptidase S29 domain; it reads APITAYAQQT…ESLETTMRSP (182 aa). Catalysis depends on charge relay system; for serine protease NS3 activity residues H1083 and D1107. Residues C1123 and C1125 each contribute to the Zn(2+) site. S1165 acts as the Charge relay system; for serine protease NS3 activity in catalysis. C1171 and H1175 together coordinate Zn(2+). The region spanning 1217 to 1369 is the Helicase ATP-binding domain; it reads PTVPQSYQVA…SNIEEVALSA (153 aa). 1230 to 1237 lines the ATP pocket; the sequence is APTGSGKS. Residues S1237 and E1317 each contribute to the Mg(2+) site. Positions 1316–1319 match the DECH box motif; sequence DECH. The RNA-binding stretch occupies residues 1486 to 1497; sequence QRRGRTGRGKHG. Residues 1658 to 1678 form a helical membrane-spanning segment; it reads STWVLVGGVLAALAAYCLSTG. The NS3-binding stretch occupies residues 1679–1690; it reads SVVIVGRIILGG. At 1679-1805 the chain is on the cytoplasmic side; that stretch reads SVVIVGRIIL…AVTSPLTTQQ (127 aa). The helical transmembrane segment at 1806-1824 threads the bilayer; sequence TLFFNILGGWVAAQLASPA. Residues 1825-1828 lie on the Lumenal side of the membrane; that stretch reads AATA. Residues 1829 to 1849 traverse the membrane as a helical segment; it reads FVGAGITGAVVGSVGLGKVLV. A topological domain (cytoplasmic) is located at residue D1850. The chain crosses the membrane as a helical span at residues 1851–1871; the sequence is IIAGYGAGVAGALVAFKIMSG. Topologically, residues 1872 to 1881 are lumenal; the sequence is ETPTTEDLVN. Residues 1882–1902 traverse the membrane as a helical segment; the sequence is LLPAILSPGALVVGVVCAAIL. The Cytoplasmic portion of the chain corresponds to 1903–1972; sequence RRHVGPGEGA…WISSDCIAPC (70 aa). Residues C1968 and C1972 are each lipidated (S-palmitoyl cysteine; by host). The stretch at 1973–2002 is an intramembrane region; the sequence is ASSWLKDVWDWICEVLSDFKNWLKAKLVPQ. Residues 2003–2990 lie on the Cytoplasmic side of the membrane; sequence LPGIPFVSCQ…YHSVSHARPR (988 aa). Zn(2+) contacts are provided by C2011, C2029, C2031, and C2052. Residues 2120 to 2208 are FKBP8-binding; sequence EFFTEVDGVR…ASSSASQLSA (89 aa). Positions 2120–2332 are transcriptional activation; sequence EFFTEVDGVR…PVPPPRRKRT (213 aa). An interaction with non-structural protein 4A region spans residues 2135-2139; it reads PPCKP. The interval 2187 to 2219 is disordered; sequence ARRLKRGSPPSLASSSASQLSAPSLKATCTTHH. Positions 2189–2441 are interaction with host SKP2; sequence RLKRGSPPSL…TPCASEEAKL (253 aa). A Phosphoserine; by host; in p56 modification is found at S2194. Positions 2194-2211 are enriched in low complexity; it reads SPPSLASSSASQLSAPSL. Residues S2197, S2201, S2204, S2207, and S2210 each carry the phosphoserine; by host; in p58 modification. The ISDR stretch occupies residues 2210 to 2249; it reads SLKATCTTHHDSPDADLIEANLLWRQEMGGNITRVESENK. Positions 2210–2275 are interaction with EIF2AK2/PKR; that stretch reads SLKATCTTHH…REISIPAEIL (66 aa). Residues 2249-2306 are NS4B-binding; the sequence is KIVVLDSFDPLVAEEDDREISIPAEILRKFKQFPPAMPIWARPDYNPPLVEPWKRPDY. The SH3-binding signature appears at 2322–2325; the sequence is TPVP. Residues 2326–2334 carry the Nuclear localization signal motif; it reads PPRRKRTVV. K2350 is covalently cross-linked (Glycyl lysine isopeptide (Lys-Gly) (interchain with G-Cter in ubiquitin)). Low complexity predominate over residues 2352–2369; sequence FGSSTTSGVTSGEATESS. The interval 2352–2409 is disordered; it reads FGSSTTSGVTSGEATESSPAPSCGGELDSEAESYSSMPPLEGEPGDPDLSDGSWSTVS. The interval 2354–2377 is V3; that stretch reads SSTTSGVTSGEATESSPAPSCGGE. Phosphoserine; by host occurs at positions 2449 and 2462. In terms of domain architecture, RdRp catalytic spans 2634–2752; it reads PMGFSYDTRC…ICESAGVQED (119 aa). D2640, D2738, and D2739 together coordinate Mg(2+). Residues 2991–3011 form a helical membrane-spanning segment; the sequence is LFLWCLLLLSVGVGIYLLPNR.

The protein belongs to the hepacivirus polyprotein family. In terms of assembly, homooligomer. Interacts with E1 (via C-terminus). Interacts with the non-structural protein 5A. Interacts (via N-terminus) with host STAT1 (via SH2 domain); this interaction results in decreased STAT1 phosphorylation and ubiquitin-mediated proteasome-dependent STAT1 degradation, leading to decreased IFN-stimulated gene transcription. Interacts with host STAT3; this interaction constitutively activates STAT3. Interacts with host LTBR receptor. Interacts with host TNFRSF1A receptor and possibly induces apoptosis. Interacts with host HNRPK. Interacts with host YWHAE. Interacts with host UBE3A/E6AP. Interacts with host DDX3X. Interacts with host APOA2. Interacts with host RXRA protein. Interacts with host SP110 isoform 3/Sp110b; this interaction sequesters the transcriptional corepressor SP110 away from the nucleus. Interacts with host CREB3 nuclear transcription protein; this interaction triggers cell transformation. Interacts with host ACY3. Interacts with host C1QR1. Interacts with host RBM24; this interaction, which enhances the interaction of the mature core protein with 5'-UTR, may inhibit viral translation and favor replication. Interacts with host EIF2AK2/PKR; this interaction induces the autophosphorylation of EIF2AK2. Part of the viral assembly initiation complex composed of NS2, E1, E2, NS3, NS4A, NS5A and the mature core protein. As to quaternary structure, forms a heterodimer with envelope glycoprotein E2. Interacts with mature core protein. Interacts with protease NS2. The heterodimer E1/E2 interacts with host CLDN1; this interaction plays a role in viral entry into host cell. Interacts with host SPSB2 (via C-terminus). Part of the viral assembly initiation complex composed of NS2, E1, E2, NS3, NS4A, NS5A and the mature core protein. Interacts with host NEURL3; this interaction prevents E1 binding to glycoprotein E2. Forms a heterodimer with envelope glycoprotein E1. Interacts with host CD81 and SCARB1 receptors; these interactions play a role in viral entry into host cell. Interacts with host EIF2AK2/PKR; this interaction inhibits EIF2AK2 and probably allows the virus to evade the innate immune response. Interacts with host CD209/DC-SIGN and CLEC4M/DC-SIGNR. Interact with host SPCS1; this interaction is essential for viral particle assembly. Interacts with protease NS2. The heterodimer E1/E2 interacts with host CLDN1; this interaction plays a role in viral entry into host cell. Part of the viral assembly initiation complex composed of NS2, E1, E2, NS3, NS4A, NS5A and the mature core protein. Interacts with host SLC3A2/4F2hc; the interaction may facilitate viral entry into host cell. Interacts with human PLSCR1. In terms of assembly, homohexamer. Homoheptamer. Interacts with protease NS2. As to quaternary structure, homodimer. Interacts with host SPCS1; this interaction is essential for viral particle assembly. Interacts with envelope glycoprotein E1. Interacts with envelope glycoprotein E2. Interacts with viroporin p7. Interacts with serine protease/helicase NS3. Part of the replication complex composed of NS2, NS3, NS4A, NS4B, NS5A and the RNA-directed RNA polymerase embedded in an ER-derived membranous web. Part of the viral assembly initiation complex composed of NS2, E1, E2, NS3, NS4A, NS5A and the mature core protein. Interacts with protease NS2. Interacts with non-structural protein 4A; this interaction stabilizes the folding of NS3 serine protease. NS3-NS4A interaction is essential for NS3 activation and allows membrane anchorage of the latter. NS3/NS4A complex also prevents phosphorylation of host IRF3, thus preventing the establishment of dsRNA induced antiviral state. Interacts with host MAVS; this interaction leads to the cleavage and inhibition of host MAVS. Interacts with host TICAM1; this interaction leads to the cleavage and inhibition of host TICAM1. Interacts with host TANK-binding kinase/TBK1; this interaction results in the inhibition of the association between TBK1 and IRF3, which leads to the inhibition of IRF3 activation. Interacts with host RBM24. Part of the replication complex composed of NS2, NS3, NS4A, NS4B, NS5A and the RNA-directed RNA polymerase embedded in an ER-derived membranous web. Part of the viral assembly initiation complex composed of NS2, E1, E2, NS3, NS4A, NS5A and the mature core protein. In terms of assembly, interacts with NS3 serine protease; this interaction stabilizes the folding of NS3 serine protease. NS3-NS4A interaction is essential for NS3 activation and allows membrane anchorage of the latter. Interacts with non-structural protein 5A (via N-terminus). Part of the replication complex composed of NS2, NS3, NS4A, NS4B, NS5A and the RNA-directed RNA polymerase embedded in an ER-derived membranous web. Part of the viral assembly initiation complex composed of NS2, E1, E2, NS3, NS4A, NS5A and the mature core protein. As to quaternary structure, homomultimer. Interacts with non-structural protein NS5A. Interacts with host PLA2G4C; this interaction likely initiates the recruitment of replication complexes to lipid droplets. Interacts with host STING; this interaction disrupts the interaction between STING and TBK1 thereby suppressing the interferon signaling. Part of the replication complex composed of NS2, NS3, NS4A, NS4B, NS5A and the RNA-directed RNA polymerase embedded in an ER-derived membranous web. Monomer. Homodimer; dimerization is required for RNA-binding. Interacts with the mature core protein. Interacts (via N-terminus) with non-structural protein 4A. Interacts with non-structural protein 4B. Interacts (via region D2) with RNA-directed RNA polymerase. Part of the viral assembly initiation complex composed of NS2, E1, E2, NS3, NS4A, NS5A and the mature core protein. Part of the replication complex composed of NS2, NS3, NS4A, NS4B, NS5A and the RNA-directed RNA polymerase embedded in an ER-derived membranous web. Interacts with host GRB2. Interacts with host BIN1. Interacts with host PIK3R1. Interacts with host SRCAP. Interacts with host FKBP8. Interacts (via C-terminus) with host VAPB (via MSP domain). Interacts with host EIF2AK2/PKR; this interaction leads to disruption of EIF2AK2 dimerization by NS5A and probably allows the virus to evade the innate immune response. Interacts (via N-terminus) with host PACSIN2 (via N-terminus); this interaction attenuates protein kinase C alpha-mediated phosphorylation of PACSIN2 by disrupting the interaction between PACSIN2 and PRKCA. Interacts (via N-terminus) with host SRC kinase (via SH2 domain). Interacts with most Src-family kinases. Interacts with host IFI27 and SKP2; promotes the ubiquitin-mediated proteasomal degradation of NS5A. Interacts with host GPS2. Interacts with host TNFRSF21; this interaction allows the modulation by the virus of JNK, p38 MAPK, STAT3, and Akt signaling pathways in a DR6-dependent manner. Interacts (via N-terminus) with host CIDEB (via N-terminus); this interaction seems to regulate the association of HCV particles with APOE. Interacts with host CHKA/Choline Kinase-alpha; CHKA bridges host PI4KA and NS5A and potentiates NS5A-stimulated PI4KA activity, which then facilitates the targeting of the ternary complex to the ER for viral replication. Interacts with host SPSB2 (via C-terminus); this interaction targets NS5A for ubiquitination and degradation. Interacts with host RAB18; this interaction may promote the association of NS5A and other replicase components with lipid droplets. Interacts (via region D2) with host PPIA/CYPA; the interaction stimulates RNA-binding ability of NS5A and is dependent on the peptidyl-prolyl cis-trans isomerase activity of PPIA/CYPA. Interacts with host TRIM14; this interaction induces the degradation of NS5A. In terms of assembly, homooligomer. Interacts with non-structural protein 5A. Interacts with host VAPB. Interacts with host PRK2/PKN2. Interacts with host HNRNPA1 and SEPT6; these interactions facilitate viral replication. Part of the replication complex composed of NS2, NS3, NS4A, NS4B, NS5A and the RNA-directed RNA polymerase. Zn(2+) serves as cofactor. Mg(2+) is required as a cofactor. In terms of processing, specific enzymatic cleavages in vivo yield mature proteins. The structural proteins, core, E1, E2 and p7 are produced by proteolytic processing by host signal peptidases. The core protein precursor is synthesized as a 23 kDa, which is retained in the ER membrane through the hydrophobic signal peptide. Cleavage by the signal peptidase releases the 21 kDa mature core protein. The cleavage of the core protein precursor occurs between aminoacids 176 and 188 but the exact cleavage site is not known. Some degraded forms of the core protein appear as well during the course of infection. The other proteins (p7, NS2, NS3, NS4A, NS4B, NS5A and NS5B) are cleaved by the viral proteases. Autoprocessing between NS2 and NS3 is mediated by the NS2 cysteine protease catalytic domain and regulated by the NS3 N-terminal domain. Phosphorylated by host PKC and PKA. Post-translationally, ubiquitinated; mediated by UBE3A and leading to core protein subsequent proteasomal degradation. In terms of processing, highly N-glycosylated. Palmitoylation is required for NS2/3 autoprocessing and E2 recruitment to membranes. Post-translationally, palmitoylated. This modification may play a role in its polymerization or in protein-protein interactions. In terms of processing, phosphorylated on serines in a basal form termed p56. p58 is a hyperphosphorylated form of p56. p56 and p58 coexist in the cell in roughly equivalent amounts. Hyperphosphorylation is dependent on the presence of NS4A. Host CSNK1A1/CKI-alpha or RPS6KB1 kinases may be responsible for NS5A phosphorylation. Tyrosine phosphorylation is essential for the interaction with host SRC. Post-translationally, the N-terminus is phosphorylated by host PRK2/PKN2.

The protein resides in the host endoplasmic reticulum membrane. It is found in the host mitochondrion membrane. The protein localises to the virion. It localises to the host cytoplasm. Its subcellular location is the host nucleus. The protein resides in the host lipid droplet. It is found in the virion membrane. The protein localises to the host mitochondrion. It localises to the host cell membrane. Its subcellular location is the host perinuclear region. The catalysed reaction is Hydrolysis of four peptide bonds in the viral precursor polyprotein, commonly with Asp or Glu in the P6 position, Cys or Thr in P1 and Ser or Ala in P1'.. It carries out the reaction a ribonucleoside 5'-triphosphate + H2O = a ribonucleoside 5'-diphosphate + phosphate + H(+). It catalyses the reaction ATP + H2O = ADP + phosphate + H(+). The enzyme catalyses RNA(n) + a ribonucleoside 5'-triphosphate = RNA(n+1) + diphosphate. With respect to regulation, inhibited by the antiviral drug hexamethylene amiloride. Inhibition by amantadine appears to be genotype-dependent. Also inhibited by long-alkyl-chain iminosugar derivatives. Its activity is regulated as follows. Activity is up-regulated by PRK2/PKN2-mediated phosphorylation. In terms of biological role, packages viral RNA to form a viral nucleocapsid, and promotes virion budding. Participates in the viral particle production as a result of its interaction with the non-structural protein 5A. Binds RNA and may function as a RNA chaperone to induce the RNA structural rearrangements taking place during virus replication. Modulates viral translation initiation by interacting with viral IRES and 40S ribosomal subunit. Affects various cell signaling pathways, host immunity and lipid metabolism. Prevents the establishment of cellular antiviral state by blocking the interferon-alpha/beta (IFN-alpha/beta) and IFN-gamma signaling pathways and by blocking the formation of phosphorylated STAT1 and promoting ubiquitin-mediated proteasome-dependent degradation of STAT1. Activates STAT3 leading to cellular transformation. Regulates the activity of cellular genes, including c-myc and c-fos. May repress the promoter of p53, and sequester CREB3 and SP110 isoform 3/Sp110b in the cytoplasm. Represses cell cycle negative regulating factor CDKN1A, thereby interrupting an important check point of normal cell cycle regulation. Targets transcription factors involved in the regulation of inflammatory responses and in the immune response: suppresses TNF-induced NF-kappa-B activation, and activates AP-1. Binds to dendritic cells (DCs) via C1QR1, resulting in down-regulation of T-lymphocytes proliferation. Alters lipid metabolism by interacting with hepatocellular proteins involved in lipid accumulation and storage. Induces up-regulation of FAS promoter activity, and thereby contributes to the increased triglyceride accumulation in hepatocytes (steatosis). Its function is as follows. Forms a heterodimer with envelope glycoprotein E2, which mediates virus attachment to the host cell, virion internalization through clathrin-dependent endocytosis and fusion with host membrane. Fusion with the host cell is most likely mediated by both E1 and E2, through conformational rearrangements of the heterodimer required for fusion rather than a classical class II fusion mechanism. E1/E2 heterodimer binds host apolipoproteins such as APOB and ApoE thereby forming a lipo-viro-particle (LVP). APOE associated to the LVP allows the initial virus attachment to cell surface receptors such as the heparan sulfate proteoglycans (HSPGs), syndecan-1 (SDC1), syndecan-1 (SDC2), the low-density lipoprotein receptor (LDLR) and scavenger receptor class B type I (SCARB1). The cholesterol transfer activity of SCARB1 allows E2 exposure and binding of E2 to SCARB1 and the tetraspanin CD81. E1/E2 heterodimer binding on CD81 activates the epithelial growth factor receptor (EGFR) signaling pathway. Diffusion of the complex E1-E2-EGFR-SCARB1-CD81 to the cell lateral membrane allows further interaction with Claudin 1 (CLDN1) and occludin (OCLN) to finally trigger HCV entry. Forms a heterodimer with envelope glycoprotein E1, which mediates virus attachment to the host cell, virion internalization through clathrin-dependent endocytosis and fusion with host membrane. Fusion with the host cell is most likely mediated by both E1 and E2, through conformational rearrangements of the heterodimer required for fusion rather than a classical class II fusion mechanism. The interaction between envelope glycoprotein E2 and host apolipoprotein E/APOE allows the proper assembly, maturation and infectivity of the viral particles. This interaction is probably promoted via the up-regulation of cellular autophagy by the virus. E1/E2 heterodimer binds host apolipoproteins such as APOB and APOE thereby forming a lipo-viro-particle (LVP). APOE associated to the LVP allows the initial virus attachment to cell surface receptors such as the heparan sulfate proteoglycans (HSPGs), syndecan-1 (SDC1), syndecan-1 (SDC2), the low-density lipoprotein receptor (LDLR) and scavenger receptor class B type I (SCARB1). The cholesterol transfer activity of SCARB1 allows E2 exposure and binding of E2 to SCARB1 and the tetraspanin CD81. E1/E2 heterodimer binding on CD81 activates the epithelial growth factor receptor (EGFR) signaling pathway. Diffusion of the complex E1-E2-EGFR-SCARB1-CD81 to the cell lateral membrane allows further interaction with Claudin 1 (CLDN1) and occludin (OCLN) to finally trigger HCV entry. Inhibits host EIF2AK2/PKR activation, preventing the establishment of an antiviral state. Viral ligand for CD209/DC-SIGN and CLEC4M/DC-SIGNR, which are respectively found on dendritic cells (DCs), and on liver sinusoidal endothelial cells and macrophage-like cells of lymph node sinuses. These interactions allow the capture of circulating HCV particles by these cells and subsequent facilitated transmission to permissive cells such as hepatocytes and lymphocyte subpopulations. The interaction between E2 and host amino acid transporter complex formed by SLC3A2 and SLC7A5/LAT1 may facilitate viral entry into host cell. Functionally, ion channel protein that acts as a viroporin and plays an essential role in the assembly, envelopment and secretion of viral particles. Regulates the host cell secretory pathway, which induces the intracellular retention of viral glycoproteins and favors assembly of viral particles. Creates a pore in acidic organelles and releases Ca(2+) and H(+) in the cytoplasm of infected cells, leading to a productive viral infection. High levels of cytoplasmic Ca(2+) may trigger membrane trafficking and transport of viral ER-associated proteins to viroplasms, sites of viral genome replication. This ionic imbalance induces the assembly of the inflammasome complex, which triggers the maturation of pro-IL-1beta into IL-1beta through the action of caspase-1. Targets also host mitochondria and induces mitochondrial depolarization. In addition of its role as a viroporin, acts as a lipid raft adhesion factor. In terms of biological role, cysteine protease required for the proteolytic auto-cleavage between the non-structural proteins NS2 and NS3. The N-terminus of NS3 is required for the function of NS2 protease (active region NS2-3). Promotes the initiation of viral particle assembly by mediating the interaction between structural and non-structural proteins. Its function is as follows. Displays three enzymatic activities: serine protease with a chymotrypsin-like fold, NTPase and RNA helicase. NS3 serine protease, in association with NS4A, is responsible for the cleavages of NS3-NS4A, NS4A-NS4B, NS4B-NS5A and NS5A-NS5B. The NS3/NS4A complex prevents phosphorylation of host IRF3, thus preventing the establishment of dsRNA induced antiviral state. The NS3/NS4A complex induces host amino acid transporter component SLC3A2, thus contributing to HCV propagation. NS3 RNA helicase binds to RNA and unwinds both dsDNA and dsRNA in the 3' to 5' direction, and likely resolves RNA complicated stable secondary structures in the template strand. Binds a single ATP and catalyzes the unzipping of a single base pair of dsRNA. Inhibits host antiviral proteins TBK1 and IRF3 thereby preventing the establishment of an antiviral state. Cleaves host MAVS/CARDIF thereby preventing the establishment of an antiviral state. Cleaves host TICAM1/TRIF, thereby disrupting TLR3 signaling and preventing the establishment of an antiviral state. Induces a specific membrane alteration that serves as a scaffold for the virus replication complex. This membrane alteration gives rise to the so-called ER-derived membranous web that contains the replication complex. NS4B self-interaction contributes to its function in membranous web formation. Promotes host TRIF protein degradation in a CASP8-dependent manner thereby inhibiting host TLR3-mediated interferon signaling. Disrupts the interaction between STING and TBK1 contributing to the inhibition of interferon signaling. Functionally, phosphorylated protein that is indispensable for viral replication and assembly. Both hypo- and hyperphosphorylated states are required for the viral life cycle. The hyperphosphorylated form of NS5A is an inhibitor of viral replication. Involved in RNA-binding and especially in binding to the viral genome. Zinc is essential for RNA-binding. Participates in the viral particle production as a result of its interaction with the mature viral core protein. Its interaction with host VAPB may target the viral replication complex to vesicles. Down-regulates viral IRES translation initiation. Mediates interferon resistance, presumably by interacting with and inhibiting host EIF2AK2/PKR. Prevents BIN1-induced apoptosis. Acts as a transcriptional activator of some host genes important for viral replication when localized in the nucleus. Via the interaction with host PACSIN2, modulates lipid droplet formation in order to promote virion assembly. Modulates TNFRSF21/DR6 signaling pathway for viral propagation. In terms of biological role, RNA-dependent RNA polymerase that performs primer-template recognition and RNA synthesis during viral replication. Initiates RNA transcription/replication at a flavin adenine dinucleotide (FAD), resulting in a 5'- FAD cap on viral RNAs. In this way, recognition of viral 5' RNA by host pattern recognition receptors can be bypassed, thereby evading activation of antiviral pathways. The polypeptide is Genome polyprotein (Hepatitis C virus genotype 1c (isolate India) (HCV)).